Reading from the N-terminus, the 490-residue chain is tRNA-guanine(15) transglycosylase (490 aa).

Residue D90 is the Nucleophile of the active site. The substrate site is built by D125 and A193. Zn(2+)-binding residues include C276, C278, and C281.

The protein belongs to the archaeosine tRNA-ribosyltransferase family. It depends on Zn(2+) as a cofactor.

It carries out the reaction guanosine(15) in tRNA + 7-cyano-7-deazaguanine = 7-cyano-7-carbaguanosine(15) in tRNA + guanine. Its pathway is tRNA modification; archaeosine-tRNA biosynthesis. Exchanges the guanine residue with 7-cyano-7-deazaguanine (preQ0) at position 15 in the dihydrouridine loop (D-loop) of archaeal tRNAs. This Methanosarcina acetivorans (strain ATCC 35395 / DSM 2834 / JCM 12185 / C2A) protein is tRNA-guanine(15) transglycosylase.